We begin with the raw amino-acid sequence, 470 residues long: Argininosuccinate synthase (470 aa).

Residues 17-25 and Ala43 contribute to the ATP site; that span reads AFSGGLDTS. Tyr99 is a binding site for L-citrulline. The ATP site is built by Gly129 and Thr131. Positions 131, 135, and 136 each coordinate L-aspartate. Asn135 contributes to the L-citrulline binding site. Residue Asp136 participates in ATP binding. Positions 139 and 192 each coordinate L-citrulline. Asp194 is an ATP binding site. Residues Thr201, Glu203, and Glu280 each coordinate L-citrulline. A disordered region spans residues 448–470; sequence IASRGESSGDELLDRAAMESGTD.

This sequence belongs to the argininosuccinate synthase family. Type 2 subfamily. As to quaternary structure, homotetramer.

Its subcellular location is the cytoplasm. The catalysed reaction is L-citrulline + L-aspartate + ATP = 2-(N(omega)-L-arginino)succinate + AMP + diphosphate + H(+). It functions in the pathway amino-acid biosynthesis; L-arginine biosynthesis; L-arginine from L-ornithine and carbamoyl phosphate: step 2/3. The sequence is that of Argininosuccinate synthase from Kineococcus radiotolerans (strain ATCC BAA-149 / DSM 14245 / SRS30216).